The primary structure comprises 184 residues: uncharacterized protein (184 aa).

The interval 32-52 is disordered; the sequence is PCPRSRTQGQSRRSETHTISR.

It localises to the mitochondrion. This is an uncharacterized protein from Arabidopsis thaliana (Mouse-ear cress).